Consider the following 81-residue polypeptide: MKTLLLTLVVVTIVCLDLGYTMTCCNQQSSQPKTTTNCAESSCYKKTWSDHRGTRIERGCGCPQVKRGIKLECCHTNECNN.

Residues 1-21 (MKTLLLTLVVVTIVCLDLGYT) form the signal peptide. Intrachain disulfides connect cysteine 24/cysteine 43, cysteine 38/cysteine 60, cysteine 62/cysteine 73, and cysteine 74/cysteine 79.

Belongs to the three-finger toxin family. Short-chain subfamily. Type I alpha-neurotoxin sub-subfamily. As to expression, expressed by the venom gland.

It is found in the secreted. Its function is as follows. Binds to muscle nicotinic acetylcholine receptor (nAChR) and inhibit acetylcholine from binding to the receptor, thereby impairing neuromuscular transmission. In Hydrophis hardwickii (Hardwick's spine-bellied seasnake), this protein is Short neurotoxin SN160.